Consider the following 258-residue polypeptide: TLC domain-containing protein 4 A (258 aa).

7 consecutive transmembrane segments (helical) span residues 8 to 28 (YLIS…YIWI), 49 to 71 (IEWT…SCYC), 92 to 112 (FILK…IIYY), 118 to 138 (WPII…IGLY), 144 to 164 (LTLL…MKWF), 170 to 190 (LENH…FIFI), and 217 to 237 (IIFF…YLVI). The TLC domain maps to 46-245 (SSKIEWTNKI…VIKGILKHLS (200 aa)).

Belongs to the TLCD4 family.

It is found in the membrane. The polypeptide is TLC domain-containing protein 4 A (tlcd4a) (Dictyostelium discoideum (Social amoeba)).